The following is a 146-amino-acid chain: D-aminoacyl-tRNA deacylase (146 aa).

The short motif at 137–138 (GP) is the Gly-cisPro motif, important for rejection of L-amino acids element.

It belongs to the DTD family. Homodimer.

It localises to the cytoplasm. It carries out the reaction glycyl-tRNA(Ala) + H2O = tRNA(Ala) + glycine + H(+). The catalysed reaction is a D-aminoacyl-tRNA + H2O = a tRNA + a D-alpha-amino acid + H(+). In terms of biological role, an aminoacyl-tRNA editing enzyme that deacylates mischarged D-aminoacyl-tRNAs. Also deacylates mischarged glycyl-tRNA(Ala), protecting cells against glycine mischarging by AlaRS. Acts via tRNA-based rather than protein-based catalysis; rejects L-amino acids rather than detecting D-amino acids in the active site. By recycling D-aminoacyl-tRNA to D-amino acids and free tRNA molecules, this enzyme counteracts the toxicity associated with the formation of D-aminoacyl-tRNA entities in vivo and helps enforce protein L-homochirality. The chain is D-aminoacyl-tRNA deacylase from Anoxybacillus flavithermus (strain DSM 21510 / WK1).